The following is a 327-amino-acid chain: RNA ligase 1 (327 aa).

Mg(2+) is required as a cofactor. It depends on Mn(2+) as a cofactor. AMPylates itself (auto-AMPylation).

The enzyme catalyses ATP + (ribonucleotide)n-3'-hydroxyl + 5'-phospho-(ribonucleotide)m = (ribonucleotide)n+m + AMP + diphosphate.. In terms of biological role, functions as an RNA ligase, in vitro. The ligation reaction entails three nucleotidyl transfer steps. In the first step, the RNA ligase reacts with ATP in the absence of nucleic acid to form a covalent ligase-AMP intermediate and release pyrophosphate. In step 2, the ligase-AMP binds to the nucleic acid and transfers the adenylate to the 5'-PO4 terminus to form an adenylylated intermediate. In step 3, the RNA ligase directs the attack of the 3'-OH on the 5'-phosphoanhydride linkage, resulting in a repaired 3'-5' phosphodiester and release of AMP. Exhibits selectivity for single-stranded RNA substrates and may not have nick-sealing activity on double-stranded DNA-RNA hybrids. May play a role in maintaining RNA integrity under stress conditions, for example in response to reactive oxygen species (ROS). This is RNA ligase 1 from Mus musculus (Mouse).